The primary structure comprises 659 residues: PAN2-PAN3 deadenylation complex subunit PAN3 (659 aa).

Disordered stretches follow at residues 1-26 (MASA…AREN) and 103-132 (PKAA…QENI). A C3H1-type zinc finger spans residues 26-55 (NAKDTLCRNVTIYGRCRYEDKGCAFNHDPL). Positions 115 to 132 (SVASRSNTSTPNSRQENI) are enriched in polar residues. The pseudokinase domain stretch occupies residues 262 to 522 (QTLPNTQLPA…NIDIFITGIS (261 aa)). Residues Arg-314, 363–370 (DYYPLSKT), and 422–423 (SK) contribute to the ATP site. The stretch at 523–561 (SQLMSTFDSALHLDDQLTSDLSRELENGRLVRLMTKLNL) forms a coiled coil. The interval 562–659 (VNERPEYEHD…ALLKPARRMH (98 aa)) is knob domain.

This sequence belongs to the protein kinase superfamily. PAN3 family. As to quaternary structure, homodimer. Forms a heterotrimer with a catalytic subunit pan2 to form the poly(A)-nuclease (PAN) deadenylation complex. Interacts (via PAM-2 motif) with poly(A)-binding protein pab1 (via PABC domain), conferring substrate specificity of the enzyme complex.

The protein resides in the cytoplasm. Its function is as follows. Regulatory subunit of the poly(A)-nuclease (PAN) deadenylation complex, one of two cytoplasmic mRNA deadenylases involved in mRNA turnover. PAN specifically shortens poly(A) tails of RNA and the activity is stimulated by poly(A)-binding protein pab1. PAN deadenylation is followed by rapid degradation of the shortened mRNA tails by the CCR4-NOT complex. Deadenylated mRNAs are then degraded by two alternative mechanisms, namely exosome-mediated 3'-5' exonucleolytic degradation, or deadenylation-dependent mRNA decaping and subsequent 5'-3' exonucleolytic degradation by xrn1. May also be involved in post-transcriptional maturation of mRNA poly(A) tails. pan3 acts as a positive regulator for PAN activity, recruiting the catalytic subunit pan2 to mRNA via its interaction with RNA and with pab1. This is PAN2-PAN3 deadenylation complex subunit PAN3 from Aspergillus clavatus (strain ATCC 1007 / CBS 513.65 / DSM 816 / NCTC 3887 / NRRL 1 / QM 1276 / 107).